Consider the following 491-residue polypeptide: Aspartyl/glutamyl-tRNA(Asn/Gln) amidotransferase subunit B (491 aa).

It belongs to the GatB/GatE family. GatB subfamily. In terms of assembly, heterotrimer of A, B and C subunits.

It carries out the reaction L-glutamyl-tRNA(Gln) + L-glutamine + ATP + H2O = L-glutaminyl-tRNA(Gln) + L-glutamate + ADP + phosphate + H(+). It catalyses the reaction L-aspartyl-tRNA(Asn) + L-glutamine + ATP + H2O = L-asparaginyl-tRNA(Asn) + L-glutamate + ADP + phosphate + 2 H(+). Allows the formation of correctly charged Asn-tRNA(Asn) or Gln-tRNA(Gln) through the transamidation of misacylated Asp-tRNA(Asn) or Glu-tRNA(Gln) in organisms which lack either or both of asparaginyl-tRNA or glutaminyl-tRNA synthetases. The reaction takes place in the presence of glutamine and ATP through an activated phospho-Asp-tRNA(Asn) or phospho-Glu-tRNA(Gln). This chain is Aspartyl/glutamyl-tRNA(Asn/Gln) amidotransferase subunit B, found in Prochlorococcus marinus (strain NATL1A).